A 688-amino-acid polypeptide reads, in one-letter code: Elongation factor G (688 aa).

The tr-type G domain occupies 8–282; the sequence is DKFRNFGIMA…GVVDYLPSPL (275 aa). GTP-binding positions include 17–24, 81–85, and 135–138; these read AHIDAGKT, DTPGH, and NKMD.

The protein belongs to the TRAFAC class translation factor GTPase superfamily. Classic translation factor GTPase family. EF-G/EF-2 subfamily.

It localises to the cytoplasm. Catalyzes the GTP-dependent ribosomal translocation step during translation elongation. During this step, the ribosome changes from the pre-translocational (PRE) to the post-translocational (POST) state as the newly formed A-site-bound peptidyl-tRNA and P-site-bound deacylated tRNA move to the P and E sites, respectively. Catalyzes the coordinated movement of the two tRNA molecules, the mRNA and conformational changes in the ribosome. This chain is Elongation factor G, found in Clostridium botulinum (strain Eklund 17B / Type B).